The primary structure comprises 241 residues: Chloride intracellular channel protein 1 (241 aa).

Ala-2 is subject to N-acetylalanine. The required for insertion into the membrane stretch occupies residues 2 to 90 (AEEQPQVELF…EEFLEAVLCP (89 aa)). Lys-13 bears the N6-acetyllysine mark. The G-site motif lies at 24-27 (CPFS). Cysteines 24 and 59 form a disulfide. A helical membrane pass occupies residues 26–46 (FSQRLFMVLWLKGVTFNVTTV). Positions 93 to 233 (YPKLAALNPE…PDDEEIELAY (141 aa)) constitute a GST C-terminal domain. N6-acetyllysine is present on Lys-119. A Phosphoserine modification is found at Ser-121. Residue Lys-131 is modified to N6-acetyllysine. 2 positions are modified to phosphoserine: Ser-156 and Ser-211. The residue at position 233 (Tyr-233) is a Phosphotyrosine.

The protein belongs to the chloride channel CLIC family. In terms of assembly, monomer. Homodimer (in vitro). Interacts with TRAPPC2. Dimerization requires a conformation change that leads to the exposure of a large hydrophobic surface. In vivo, this may lead to membrane insertion.

Its subcellular location is the nucleus. The protein localises to the nucleus membrane. It localises to the cytoplasm. The protein resides in the cell membrane. It is found in the endoplasmic reticulum. It catalyses the reaction L-dehydroascorbate + 2 glutathione = glutathione disulfide + L-ascorbate. The enzyme catalyses chloride(in) = chloride(out). It carries out the reaction iodide(out) = iodide(in). The catalysed reaction is thiocyanate(in) = thiocyanate(out). It catalyses the reaction nitrate(in) = nitrate(out). The enzyme catalyses bromide(in) = bromide(out). It carries out the reaction fluoride(in) = fluoride(out). Functionally, in the soluble state, catalyzes glutaredoxin-like thiol disulfide exchange reactions with reduced glutathione as electron donor. Reduces selenite and dehydroascorbate and may act as an antioxidant during oxidative stress response. Can insert into membranes and form voltage-dependent multi-ion conductive channels. Membrane insertion seems to be redox-regulated and may occur only under oxidizing conditions. Involved in regulation of the cell cycle. This chain is Chloride intracellular channel protein 1 (CLIC1), found in Oryctolagus cuniculus (Rabbit).